The primary structure comprises 80 residues: Serine palmitoyltransferase small subunit A-B (80 aa).

At 1–21 (MKVSCEDVNGPRSSLGRAWNH) the chain is on the cytoplasmic side. A helical transmembrane segment spans residues 22-38 (VSWLYYQYLLVTALYML). Residues 39-43 (EPWER) are Lumenal-facing. Residues 44–66 (TVFNSMLVSIVGMALYTGYIFMP) form a helical membrane-spanning segment. Topologically, residues 67–80 (QHILAILHYFEIVQ) are cytoplasmic.

This sequence belongs to the SPTSS family. SPTSSA subfamily. In terms of assembly, component of the serine palmitoyltransferase (SPT) complex, which is composed of SPTLC1, SPTLC2 or SPTLC3 and SPTSSA or SPTSSB. The heterodimer consisting of SPTLC1 and SPTLC2/SPTLC3 forms the catalytic core of the enzyme, while SPTSSA or SPTSSB subunits determine substrate specificity. SPT also interacts with ORMDL proteins, especially ORMDL3, which negatively regulate SPT activity in the presence of ceramides.

The protein localises to the endoplasmic reticulum membrane. The protein operates within lipid metabolism; sphingolipid metabolism. Component of the serine palmitoyltransferase multisubunit enzyme (SPT) that catalyzes the initial and rate-limiting step in sphingolipid biosynthesis by condensing L-serine and activated acyl-CoA (most commonly palmitoyl-CoA) to form long-chain bases. The SPT complex is composed of SPTLC1, SPTLC2 or SPTLC3 and SPTSSA or SPTSSB. Within this complex, the heterodimer consisting of SPTLC1 and SPTLC2/SPTLC3 forms the catalytic core. Within the SPT complex, SPTSSA stimulates the catalytic activity and plays a role in substrate specificity, which depends upon the overall complex composition. The SPTLC1-SPTLC2-SPTSSA complex shows a strong preference for C16-CoA substrate, while the SPTLC1-SPTLC3-SPTSSA isozyme uses both C14-CoA and C16-CoA as substrates, with a slight preference for C14-CoA. Independently of its action as a SPT component, may be involved in MBOAT7 localization to mitochondria-associated membranes, a membrane bridge between the endoplasmic reticulum and mitochondria, may hence affect MBOAT7-catalyzed incorporation of arachidonic acid into phosphatidylinositol. In Xenopus laevis (African clawed frog), this protein is Serine palmitoyltransferase small subunit A-B (sptssa-b).